A 262-amino-acid chain; its full sequence is Homeobox protein vent1 (262 aa).

2 stretches are compositionally biased toward basic and acidic residues: residues 16-26 (REEAPDGKDSV) and 44-55 (YAKEIPRRKDGQ). The interval 16–129 (REEAPDGKDS…KSPKSDLQRR (114 aa)) is disordered. A compositionally biased stretch (polar residues) spans 58–79 (GEITSFQCSSEEARNRQFSNPS). Basic and acidic residues predominate over residues 114 to 128 (DTEHRSKSPKSDLQR). A DNA-binding region (homeobox) is located at residues 127–186 (QRRLRTAFTPQQITRLEQAFNKQRYLGASERKKLATSLQLSEIQVKTWFQNRRMKLKRQI).

Its subcellular location is the nucleus. Its function is as follows. Transcriptional repressor. Cooperates with vent2 in a ventral signaling pathway downstream of bmp4, which antagonizes the Spemann organizer and dorsal mesoderm formation, and leads to ventral mesoderm formation. Acts downstream of bmp4 to repress transcription of foxa4-B/XFD-1'. Binds to DNA with preference for the target sequence 5'-CTATT[T/C]G-3'. Also binds 5'-TGCATTTTG-3' at a lower frequency, and occasionally 5'-TTGATC-3'. Binds to the homeobox 2 (HBX2) repressor element in the promoter of the myf5 gene. Cooperates with vent2 to repress myf5 expression in the ventral domain. This Xenopus tropicalis (Western clawed frog) protein is Homeobox protein vent1.